The sequence spans 394 residues: Elongation factor Tu 2 (394 aa).

The tr-type G domain occupies 9-204 (KPHCNIGTIG…SIDDYIPQPT (196 aa)). The segment at 18–25 (GHVDHGKT) is G1. 18-25 (GHVDHGKT) lines the GTP pocket. T25 is a Mg(2+) binding site. Residues 61–65 (GITIQ) are G2. The tract at residues 82-85 (DCPG) is G3. GTP is bound by residues 82-86 (DCPGH) and 137-140 (NKID). Residues 137–140 (NKID) are G4. Residues 174 to 176 (SAL) are G5.

It belongs to the TRAFAC class translation factor GTPase superfamily. Classic translation factor GTPase family. EF-Tu/EF-1A subfamily. As to quaternary structure, monomer.

It is found in the cytoplasm. The enzyme catalyses GTP + H2O = GDP + phosphate + H(+). GTP hydrolase that promotes the GTP-dependent binding of aminoacyl-tRNA to the A-site of ribosomes during protein biosynthesis. This is Elongation factor Tu 2 from Orientia tsutsugamushi (strain Boryong) (Rickettsia tsutsugamushi).